The sequence spans 43 residues: Cytochrome b559 subunit beta (43 aa).

Residues 18 to 34 traverse the membrane as a helical segment; sequence WLAVHGLAIPTVFFLGG. Histidine 22 serves as a coordination point for heme.

Belongs to the PsbE/PsbF family. In terms of assembly, heterodimer of an alpha subunit and a beta subunit. PSII is composed of 1 copy each of membrane proteins PsbA, PsbB, PsbC, PsbD, PsbE, PsbF, PsbH, PsbI, PsbJ, PsbK, PsbL, PsbM, PsbT, PsbX, PsbY, PsbZ, Psb30/Ycf12, at least 3 peripheral proteins of the oxygen-evolving complex and a large number of cofactors. It forms dimeric complexes. Requires heme b as cofactor.

Its subcellular location is the plastid. The protein localises to the chloroplast thylakoid membrane. This b-type cytochrome is tightly associated with the reaction center of photosystem II (PSII). PSII is a light-driven water:plastoquinone oxidoreductase that uses light energy to abstract electrons from H(2)O, generating O(2) and a proton gradient subsequently used for ATP formation. It consists of a core antenna complex that captures photons, and an electron transfer chain that converts photonic excitation into a charge separation. The protein is Cytochrome b559 subunit beta of Thalassiosira pseudonana (Marine diatom).